The chain runs to 421 residues: Testin (421 aa).

The region spanning 92 to 199 (MILTNPVAAK…GDVKLPRDMN (108 aa)) is the PET domain. 2 disordered regions span residues 133 to 164 (EKQP…PSKC) and 193 to 213 (KLPR…GGDR). The segment covering 155-164 (PAHDQDPSKC) has biased composition (basic and acidic residues). 3 LIM zinc-binding domains span residues 234–297 (YSCY…CDSE), 299–359 (PRCA…NHAV), and 362–421 (QGCH…KMMS).

Belongs to the prickle / espinas / testin family. Interacts via LIM domain 1 with ZYX. Interacts (via LIM domain 3) with ENAH and VASP. Interacts with ALKBH4, talin, actin, alpha-actinin, GRIP1 and PXN. Interacts (via LIM domain 2) with ACTL7A (via N-terminus). Heterodimer with ACTL7A; the heterodimer interacts with ENAH to form a heterotrimer.

It is found in the cytoplasm. It localises to the cell junction. The protein resides in the focal adhesion. Its function is as follows. Scaffold protein that may play a role in cell adhesion, cell spreading and in the reorganization of the actin cytoskeleton. Plays a role in the regulation of cell proliferation. May act as a tumor suppressor. In Ovis aries (Sheep), this protein is Testin (TES).